A 151-amino-acid chain; its full sequence is Ribosome maturation factor RimP (151 aa).

It belongs to the RimP family.

Its subcellular location is the cytoplasm. Required for maturation of 30S ribosomal subunits. The sequence is that of Ribosome maturation factor RimP from Pseudoalteromonas translucida (strain TAC 125).